Here is a 165-residue protein sequence, read N- to C-terminus: Shikimate kinase (165 aa).

Residue 12 to 17 (GCGKST) coordinates ATP. S16 lines the Mg(2+) pocket. Substrate contacts are provided by D34, R57, and G79. R116 provides a ligand contact to ATP. R133 contacts substrate.

This sequence belongs to the shikimate kinase family. As to quaternary structure, monomer. Mg(2+) serves as cofactor.

It localises to the cytoplasm. It catalyses the reaction shikimate + ATP = 3-phosphoshikimate + ADP + H(+). It participates in metabolic intermediate biosynthesis; chorismate biosynthesis; chorismate from D-erythrose 4-phosphate and phosphoenolpyruvate: step 5/7. Its function is as follows. Catalyzes the specific phosphorylation of the 3-hydroxyl group of shikimic acid using ATP as a cosubstrate. In Clostridium botulinum (strain Alaska E43 / Type E3), this protein is Shikimate kinase.